We begin with the raw amino-acid sequence, 55 residues long: Large ribosomal subunit protein bL32c (55 aa).

It belongs to the bacterial ribosomal protein bL32 family.

Its subcellular location is the plastid. The protein resides in the chloroplast. This is Large ribosomal subunit protein bL32c from Atropa belladonna (Belladonna).